The chain runs to 432 residues: D-amino acid dehydrogenase (432 aa).

3-17 (VVVLGSGVVGVTSAW) lines the FAD pocket.

The protein belongs to the DadA oxidoreductase family. Requires FAD as cofactor.

It catalyses the reaction a D-alpha-amino acid + A + H2O = a 2-oxocarboxylate + AH2 + NH4(+). It functions in the pathway amino-acid degradation; D-alanine degradation; NH(3) and pyruvate from D-alanine: step 1/1. Oxidative deamination of D-amino acids. This Enterobacter sp. (strain 638) protein is D-amino acid dehydrogenase.